Reading from the N-terminus, the 295-residue chain is Manganese transport system membrane protein MntD (295 aa).

9 helical membrane passes run 7-27 (IIAT…FLVL), 42-62 (LLGI…YMFI), 63-83 (GAAA…SKGV), 87-107 (AAIG…LSVY), 138-158 (IGPK…VLIS), 174-194 (ALAL…MLSL), 203-223 (VGAV…HLLT), 227-247 (LYML…GYFF), and 253-273 (VSIS…AFLF).

Belongs to the ABC-3 integral membrane protein family. As to quaternary structure, the complex is probably composed of two ATP-binding proteins (MntB), two transmembrane proteins (MntC and MntD) and a solute-binding protein (MntA).

The protein resides in the cell membrane. Probably part of the ABC transporter complex MntABCD involved in manganese import. Probably responsible for the translocation of the substrate across the membrane. This is Manganese transport system membrane protein MntD from Bacillus subtilis (strain 168).